A 102-amino-acid polypeptide reads, in one-letter code: RNA-binding protein Hfq (102 aa).

The Sm domain maps to 9-68 (DPFLNALRRERVPVSIYLVNGIKLQGQIESFDQFVILLKNTVSQMVYKHAISTVVPSRPV). Positions 63–102 (VPSRPVSHHSNNAGGGTSSNYHHGSSPQNTSAQQDSEETE) are disordered. Polar residues predominate over residues 70–96 (HHSNNAGGGTSSNYHHGSSPQNTSAQQ).

Belongs to the Hfq family. Homohexamer.

In terms of biological role, RNA chaperone that binds small regulatory RNA (sRNAs) and mRNAs to facilitate mRNA translational regulation in response to envelope stress, environmental stress and changes in metabolite concentrations. Also binds with high specificity to tRNAs. The protein is RNA-binding protein Hfq of Shigella dysenteriae serotype 1 (strain Sd197).